A 337-amino-acid chain; its full sequence is Putative 2-aminoethylphosphonate-binding periplasmic protein (337 aa).

Residues 1 to 21 (MKLSRLALLSVFALASAPSWA) form the signal peptide.

It belongs to the bacterial solute-binding protein 1 family.

Its subcellular location is the periplasm. Probably part of the PhnSTUV complex (TC 3.A.1.11.5) involved in 2-aminoethylphosphonate import. This chain is Putative 2-aminoethylphosphonate-binding periplasmic protein (phnS), found in Salmonella paratyphi A (strain ATCC 9150 / SARB42).